The chain runs to 423 residues: Sulfate adenylyltransferase (423 aa).

Sulfate-binding residues include Gln207 and Arg209. ATP contacts are provided by residues 207–210 (QLRN) and 301–304 (GRDH). Residues Arg209 and Asn210 contribute to the active site. Ala305 serves as a coordination point for sulfate.

This sequence belongs to the sulfate adenylyltransferase family.

The protein resides in the mitosome. The enzyme catalyses sulfate + ATP + H(+) = adenosine 5'-phosphosulfate + diphosphate. It participates in sulfur metabolism; hydrogen sulfide biosynthesis; sulfite from sulfate: step 1/3. Its function is as follows. Catalyzes the first intracellular reaction of sulfate assimilation, forming adenosine-5'-phosphosulfate (APS) from inorganic sulfate and ATP. This is Sulfate adenylyltransferase from Entamoeba histolytica (strain ATCC 30459 / HM-1:IMSS / ABRM).